Here is a 406-residue protein sequence, read N- to C-terminus: Acetate kinase (406 aa).

Residue Asn-7 participates in Mg(2+) binding. Lys-14 contacts ATP. Arg-90 provides a ligand contact to substrate. The active-site Proton donor/acceptor is Asp-147. Residues 207-211 (HLGNG), 283-285 (DMR), and 331-335 (GVGEN) each bind ATP. Glu-385 is a binding site for Mg(2+).

This sequence belongs to the acetokinase family. As to quaternary structure, homodimer. Mg(2+) serves as cofactor. The cofactor is Mn(2+).

It is found in the cytoplasm. The enzyme catalyses acetate + ATP = acetyl phosphate + ADP. Its pathway is metabolic intermediate biosynthesis; acetyl-CoA biosynthesis; acetyl-CoA from acetate: step 1/2. Catalyzes the formation of acetyl phosphate from acetate and ATP. Can also catalyze the reverse reaction. In Fervidobacterium nodosum (strain ATCC 35602 / DSM 5306 / Rt17-B1), this protein is Acetate kinase.